We begin with the raw amino-acid sequence, 1556 residues long: Ferredoxin-dependent glutamate synthase 2 (1556 aa).

C37 (for GATase activity) is an active-site residue. Positions 37–431 (CGVGFIANLR…PGQMIAVDLA (395 aa)) constitute a Glutamine amidotransferase type-2 domain. [3Fe-4S] cluster-binding residues include C1173, C1179, and C1184. The interval 1533 to 1556 (PSEKDSPEANGDVSLTGEKTLTSV) is disordered.

This sequence belongs to the glutamate synthase family. [3Fe-4S] cluster serves as cofactor. The cofactor is FAD. It depends on FMN as a cofactor.

The enzyme catalyses 2 oxidized [2Fe-2S]-[ferredoxin] + 2 L-glutamate = L-glutamine + 2 reduced [2Fe-2S]-[ferredoxin] + 2-oxoglutarate + 2 H(+). It participates in amino-acid biosynthesis; L-glutamate biosynthesis via GLT pathway; L-glutamate from 2-oxoglutarate and L-glutamine (ferredoxin route): step 1/1. It functions in the pathway energy metabolism; nitrogen metabolism. This chain is Ferredoxin-dependent glutamate synthase 2 (gltS), found in Synechocystis sp. (strain ATCC 27184 / PCC 6803 / Kazusa).